A 72-amino-acid polypeptide reads, in one-letter code: Gas vesicle protein A (72 aa).

The protein belongs to the gas vesicle GvpA family. As to quaternary structure, the gas vesicle shell is 2 nm thick and consists of a single layer of this protein. It forms helical ribs nearly perpendicular to the long axis of the vesicle.

It localises to the gas vesicle shell. In terms of biological role, gas vesicles are hollow, gas filled proteinaceous nanostructures found in some microorganisms. During planktonic growth they allow positioning of the organism at a favorable depth for light or nutrient acquisition. GvpA forms the protein shell. The polypeptide is Gas vesicle protein A (Pseudanabaena galeata (strain PCC 6901)).